Reading from the N-terminus, the 260-residue chain is Indole-3-glycerol phosphate synthase (260 aa).

It belongs to the TrpC family.

The enzyme catalyses 1-(2-carboxyphenylamino)-1-deoxy-D-ribulose 5-phosphate + H(+) = (1S,2R)-1-C-(indol-3-yl)glycerol 3-phosphate + CO2 + H2O. It functions in the pathway amino-acid biosynthesis; L-tryptophan biosynthesis; L-tryptophan from chorismate: step 4/5. The chain is Indole-3-glycerol phosphate synthase from Neisseria meningitidis serogroup C / serotype 2a (strain ATCC 700532 / DSM 15464 / FAM18).